The chain runs to 1230 residues: Cullin-associated NEDD8-dissociated protein 1 (1230 aa).

N-acetylalanine is present on A2. HEAT repeat units follow at residues 2 to 39, 44 to 81, 83 to 119, 131 to 165, 171 to 208, 210 to 247, 248 to 282, 289 to 366, 370 to 407, 424 to 467, 471 to 510, and 515 to 552; these read ASAS…KDSI, DSER…KVKE, QVET…ELPP, CKKI…LSRQ, NFHP…SCGN, VFVD…QAGH, RIGE…FESF, EVYP…TRHE, EFYK…QTRP, PLTM…VLPG, QHIP…NHSP, and PHVQ…VIRP. Residue K55 is modified to N6-acetyllysine. Residues 315–344 form a disordered region; sequence DEDEDENAMDADGGDDDDQGSDDEYSDDDD. S335 is modified (phosphoserine). Phosphoserine is present on S558. 15 HEAT repeats span residues 563–602, 606–643, 646–683, 688–725, 729–768, 770–808, 809–845, 852–889, 890–927, 928–960, 961–998, 1002–1039, 1043–1097, 1099–1133, and 1140–1189; these read PYIK…NLGD, PDLS…LKID, PVLG…NYSD, AMID…VYPS, KISG…TGTN, LGYM…ALTR, ACPK…LGEV, SGQL…GNLP, EYLP…GLKP, YVEN…KLTL, IDPE…DHPQ, PLLK…NKPS, DLLD…DSCL, RLDI…LSTL, and QRLD…IPEA. K971 is subject to N6-acetyllysine.

It belongs to the CAND family. As to quaternary structure, interacts with TBP. Part of a complex that contains CUL1 and RBX1. Interacts with unneddylated cullins: interacts with CUL1, CUL2, CUL3, CUL4A, CUL4B and CUL5. Does not bind neddylated CUL1. Interaction with cullins is abolished in presence of COMMD1, which antagonizes with CAND1 for interacting with cullins. Interacts with ERCC6. Interacts with DCUN1D1, DCUN1D2, DCUN1D3, DCUN1D4 and DCUN1D5; these interactions are bridged by cullins and strongly inhibits the neddylation of cullins. In terms of tissue distribution, detected in heart, brain, spleen, liver, skeletal muscle, kidney and testis.

It is found in the cytoplasm. It localises to the nucleus. Functionally, key assembly factor of SCF (SKP1-CUL1-F-box protein) E3 ubiquitin ligase complexes that promotes the exchange of the substrate-recognition F-box subunit in SCF complexes, thereby playing a key role in the cellular repertoire of SCF complexes. Acts as a F-box protein exchange factor. The exchange activity of CAND1 is coupled with cycles of neddylation conjugation: in the deneddylated state, cullin-binding CAND1 binds CUL1-RBX1, increasing dissociation of the SCF complex and promoting exchange of the F-box protein. Probably plays a similar role in other cullin-RING E3 ubiquitin ligase complexes. May indirectly enhance transcription from various types of promoters. The chain is Cullin-associated NEDD8-dissociated protein 1 (Cand1) from Rattus norvegicus (Rat).